The chain runs to 161 residues: Blue copper protein 1a (161 aa).

Positions 1-23 (MASSRVVLILSISMVLLSSVAIA) are cleaved as a signal peptide. The region spanning 24–124 (TDHIVGDDKG…QMKLVITVLA (101 aa)) is the Phytocyanin domain. Cu cation is bound at residue His-64. N-linked (GlcNAc...) asparagine glycosylation occurs at Asn-70. A disulfide bridge links Cys-77 with Cys-111. The Cu cation site is built by Cys-105, His-110, and Met-116. The chain crosses the membrane as a helical span at residues 141–161 (VVSSLFGVVMAIMVAIAVIFA).

It is found in the membrane. This Medicago truncatula (Barrel medic) protein is Blue copper protein 1a.